Consider the following 200-residue polypeptide: NAD(P)H-quinone oxidoreductase subunit 6, chloroplastic (200 aa).

The next 5 membrane-spanning stretches (helical) occupy residues 13-33 (IIFF…VLLS), 35-55 (IVYS…LYFA), 64-84 (AQIL…VMLI), 102-122 (ITLA…LNTS), and 156-176 (LLPF…AIVI).

It belongs to the complex I subunit 6 family. As to quaternary structure, NDH is composed of at least 16 different subunits, 5 of which are encoded in the nucleus.

It localises to the plastid. It is found in the chloroplast thylakoid membrane. It carries out the reaction a plastoquinone + NADH + (n+1) H(+)(in) = a plastoquinol + NAD(+) + n H(+)(out). It catalyses the reaction a plastoquinone + NADPH + (n+1) H(+)(in) = a plastoquinol + NADP(+) + n H(+)(out). NDH shuttles electrons from NAD(P)H:plastoquinone, via FMN and iron-sulfur (Fe-S) centers, to quinones in the photosynthetic chain and possibly in a chloroplast respiratory chain. The immediate electron acceptor for the enzyme in this species is believed to be plastoquinone. Couples the redox reaction to proton translocation, and thus conserves the redox energy in a proton gradient. In Physcomitrium patens (Spreading-leaved earth moss), this protein is NAD(P)H-quinone oxidoreductase subunit 6, chloroplastic (ndhG).